Consider the following 348-residue polypeptide: Erythronate-4-phosphate dehydrogenase (348 aa).

Thr-46 and Thr-67 together coordinate substrate. Asp-147 contributes to the NAD(+) binding site. Arg-209 is an active-site residue. Asp-233 is an NAD(+) binding site. Glu-238 is an active-site residue. The active-site Proton donor is the His-255. An NAD(+)-binding site is contributed by Gly-258. Position 259 (Tyr-259) interacts with substrate.

The protein belongs to the D-isomer specific 2-hydroxyacid dehydrogenase family. PdxB subfamily. In terms of assembly, homodimer.

It is found in the cytoplasm. It carries out the reaction 4-phospho-D-erythronate + NAD(+) = (R)-3-hydroxy-2-oxo-4-phosphooxybutanoate + NADH + H(+). It functions in the pathway cofactor biosynthesis; pyridoxine 5'-phosphate biosynthesis; pyridoxine 5'-phosphate from D-erythrose 4-phosphate: step 2/5. Catalyzes the oxidation of erythronate-4-phosphate to 3-hydroxy-2-oxo-4-phosphonooxybutanoate. The chain is Erythronate-4-phosphate dehydrogenase from Bacteroides thetaiotaomicron (strain ATCC 29148 / DSM 2079 / JCM 5827 / CCUG 10774 / NCTC 10582 / VPI-5482 / E50).